The primary structure comprises 180 residues: Putative adenylate kinase (180 aa).

Gly-10, Gly-12, Lys-13, Thr-14, and Thr-15 together coordinate ATP. The NMP stretch occupies residues 30–50 (SVKELALSRGIGERVSDEIEI). The LID stretch occupies residues 99–109 (ARGYSKKKLAE). Residues Arg-100 and Lys-138 each coordinate ATP.

The protein belongs to the adenylate kinase family. AK6 subfamily. In terms of assembly, interacts with uS11. Not a structural component of 40S pre-ribosomes, but transiently interacts with them by binding to uS11.

It catalyses the reaction AMP + ATP = 2 ADP. The catalysed reaction is ATP + H2O = ADP + phosphate + H(+). In terms of biological role, broad-specificity nucleoside monophosphate (NMP) kinase that catalyzes the reversible transfer of the terminal phosphate group between nucleoside triphosphates and monophosphates. Also has ATPase activity. Involved in the late maturation steps of the 30S ribosomal particles, specifically 16S rRNA maturation. While NMP activity is not required for ribosome maturation, ATPase activity is. Associates transiently with small ribosomal subunit protein uS11. ATP hydrolysis breaks the interaction with uS11. May temporarily remove uS11 from the ribosome to enable a conformational change of the ribosomal RNA that is needed for the final maturation step of the small ribosomal subunit. The chain is Putative adenylate kinase from Thermococcus onnurineus (strain NA1).